Here is a 365-residue protein sequence, read N- to C-terminus: Aminotransferase poxL (365 aa).

Residue Arg-92 coordinates pyridoxal 5'-phosphate. Residue Lys-193 is modified to N6-(pyridoxal phosphate)lysine. Residue Glu-229 coordinates pyridoxal 5'-phosphate.

Belongs to the class-IV pyridoxal-phosphate-dependent aminotransferase family. It depends on pyridoxal 5'-phosphate as a cofactor.

It participates in secondary metabolite biosynthesis. Its function is as follows. Aminotransferase; part of the gene cluster that mediates the biosynthesis of oxaleimides, cytotoxic compounds containing an unusual disubstituted succinimide moiety. The first step of the pathway is provided by the HR-PKS poxF that serves in a new mode of collaborative biosynthesis with the PKS-NRPS poxE, by providing the olefin containing amino acid substrate via the synthesis of an ACP-bound dec-4-enoate. The cytochrome P450 monooxygenase poxM-catalyzed oxidation at the alpha-position creates the enzyme-bound 2-hydroxydec-4-enoyl-ACP thioester, which may be prone to spontaneous hydrolysis to yield 2-hydroxydec-4-enoic acid due to increased electrophilicity of the carbonyl. 2-hydroxydec-4-enoic acid can then be further oxidized by poxM to yield the alpha-ketoacid 2-oxodec-4-enoicacid, which is reductively aminated by the aminotransferase poxL to yield (S,E)-2-aminodec-4-enoic acid. The Hybrid PKS-NRPS synthetase poxE then performs condensation between the octaketide product of its PKS modules and the amino group of (S,E)-2-aminodec-4-enoic acid which is activated and incorporated by the adenylation domain. The resulting aminoacyl product can be cyclized by the Diels-Alderase PoxQ and reductively released by the reductive (R) domain of poxE to yield an aldehyde intermediate. The released aldehyde is then substrate for a Knoevenagel condensation by the hydrolyase poxO followed by an oxidation at the 5-position of the pyrrolidone ring. The presence of the olefin from the amino acid building block allows for migration of the substituted allyl group to occur. This allylic transposition reaction takes place in a conjugate addition, semipinacol-like fashion to yield a succinimide intermediate. Iterative two-electron oxidations of the C7 methyl of the succinimide intermediate to the carboxylic acid can be catalyzed by one of two remaining cytochrome P450 monooxygenasess poxC or poxD to yield oxaleimide A. Subsequent oxidation yields the maleimide scaffold oxaleimide I. Both oxaleimide A and oxaleimide I can undergo oxidative modifications in the decalin ring to yield the series of products oxaleimides B to H. The chain is Aminotransferase poxL from Penicillium oxalicum.